Reading from the N-terminus, the 690-residue chain is Elongation factor G (690 aa).

The tr-type G domain maps to 8-283; sequence ERYRNFGIMA…AVVDFMPSPL (276 aa). GTP is bound by residues 17-24, 81-85, and 135-138; these read AHIDAGKT, DTPGH, and NKLD.

Belongs to the TRAFAC class translation factor GTPase superfamily. Classic translation factor GTPase family. EF-G/EF-2 subfamily.

It localises to the cytoplasm. Functionally, catalyzes the GTP-dependent ribosomal translocation step during translation elongation. During this step, the ribosome changes from the pre-translocational (PRE) to the post-translocational (POST) state as the newly formed A-site-bound peptidyl-tRNA and P-site-bound deacylated tRNA move to the P and E sites, respectively. Catalyzes the coordinated movement of the two tRNA molecules, the mRNA and conformational changes in the ribosome. This is Elongation factor G from Novosphingobium aromaticivorans (strain ATCC 700278 / DSM 12444 / CCUG 56034 / CIP 105152 / NBRC 16084 / F199).